Consider the following 312-residue polypeptide: Malate dehydrogenase (312 aa).

NAD(+) is bound by residues 12–17 and Asp36; that span reads GAGFTG. Residues Arg87 and Arg93 each coordinate substrate. Residues Asn100 and 123 to 125 contribute to the NAD(+) site; that span reads LTN. Asn125 contacts substrate. The residue at position 149 (Ser149) is a Phosphoserine. Position 156 (Arg156) interacts with substrate. His180 functions as the Proton acceptor in the catalytic mechanism.

The protein belongs to the LDH/MDH superfamily. MDH type 3 family.

It catalyses the reaction (S)-malate + NAD(+) = oxaloacetate + NADH + H(+). In terms of biological role, catalyzes the reversible oxidation of malate to oxaloacetate. The protein is Malate dehydrogenase of Geobacillus thermodenitrificans.